The primary structure comprises 325 residues: Elongation factor P--(R)-beta-lysine ligase (325 aa).

Residue serine 76–glutamate 78 coordinates substrate. ATP is bound by residues arginine 100–glutamate 102 and asparagine 109. Tyrosine 118 serves as a coordination point for substrate. Glutamate 244–leucine 245 is a binding site for ATP. Residue glutamate 251 participates in substrate binding. Glycine 300 provides a ligand contact to ATP.

Belongs to the class-II aminoacyl-tRNA synthetase family. EpmA subfamily. In terms of assembly, homodimer.

The enzyme catalyses D-beta-lysine + L-lysyl-[protein] + ATP = N(6)-((3R)-3,6-diaminohexanoyl)-L-lysyl-[protein] + AMP + diphosphate + H(+). Its function is as follows. With EpmB is involved in the beta-lysylation step of the post-translational modification of translation elongation factor P (EF-P) on 'Lys-34'. Catalyzes the ATP-dependent activation of (R)-beta-lysine produced by EpmB, forming a lysyl-adenylate, from which the beta-lysyl moiety is then transferred to the epsilon-amino group of EF-P 'Lys-34'. The sequence is that of Elongation factor P--(R)-beta-lysine ligase from Escherichia coli O139:H28 (strain E24377A / ETEC).